Here is a 1218-residue protein sequence, read N- to C-terminus: Thrombospondin type 1 domain-containing protein (1218 aa).

4 disordered regions span residues 82–101 (SAGFPRSASSSASSAPPCSS), 189–240 (SLEE…SRTR), 298–383 (HTAN…VNGL), and 445–471 (GGKSRRSEWRRKRTGMMASEARESHRG). Basic and acidic residues predominate over residues 201 to 210 (GYEEERERRS). Low complexity predominate over residues 315-375 (SSRFTSKASS…SSPLSSSPDS (61 aa)). The region spanning 638 to 704 (SCITGPWSEW…RRKCNLGACP (67 aa)) is the TSP type-1 domain. The helical transmembrane segment at 886 to 906 (GVSHLWISLCAGAVAAVVFLV) threads the bilayer. The tract at residues 1129–1153 (RRRARRGRREGDSGEGGDCGEARKA) is disordered.

As to quaternary structure, component of a complex, at least composed of cysteine repeat modular protein A (CRMPa), cysteine repeat modular protein B (CRMPb), micronemal protein 15 (MIC15) and thrombospondin type 1 domain-containing protein (TSP1).

It is found in the membrane. In terms of biological role, required for rhoptry secretion. Plays a role in host cell invasion. This is Thrombospondin type 1 domain-containing protein from Toxoplasma gondii.